The chain runs to 92 residues: Small ribosomal subunit protein uS19 (92 aa).

This sequence belongs to the universal ribosomal protein uS19 family.

Its function is as follows. Protein S19 forms a complex with S13 that binds strongly to the 16S ribosomal RNA. The chain is Small ribosomal subunit protein uS19 from Paracidovorax citrulli (strain AAC00-1) (Acidovorax citrulli).